A 299-amino-acid chain; its full sequence is NAD kinase (299 aa).

Aspartate 78 serves as the catalytic Proton acceptor. NAD(+) is bound by residues 78 to 79 (DG), 151 to 152 (ND), lysine 162, arginine 179, aspartate 181, 192 to 197 (TAYALS), and glutamine 252.

This sequence belongs to the NAD kinase family. A divalent metal cation is required as a cofactor.

Its subcellular location is the cytoplasm. The enzyme catalyses NAD(+) + ATP = ADP + NADP(+) + H(+). Involved in the regulation of the intracellular balance of NAD and NADP, and is a key enzyme in the biosynthesis of NADP. Catalyzes specifically the phosphorylation on 2'-hydroxyl of the adenosine moiety of NAD to yield NADP. This is NAD kinase from Coxiella burnetii (strain CbuG_Q212) (Coxiella burnetii (strain Q212)).